Consider the following 284-residue polypeptide: Tropomyosin-1 (284 aa).

Residues 1 to 284 (MDGIKKKMIA…DQTFAELTGY (284 aa)) adopt a coiled-coil conformation. Residues 111–131 (TKLEEASKTAEESERGRKDLE) form a disordered region.

The protein belongs to the tropomyosin family. Homodimer.

Tropomyosin, in association with the troponin complex, plays a central role in the calcium dependent regulation of muscle contraction. The protein is Tropomyosin-1 of Schistosoma mansoni (Blood fluke).